Here is a 265-residue protein sequence, read N- to C-terminus: Seminal vesicle secretory protein 3A (265 aa).

An N-terminal signal peptide occupies residues 1–20; it reads MKSIFFSLSLLLLLEKKAAG. 5 repeat units span residues 116-119, 122-125, 129-132, 136-139, and 142-145. The 5 X 4 AA tandem repeats of Q-X-K-[ST] stretch occupies residues 116–145; the sequence is QIKSQTQVKSYAAQLKSQPGQLKTIGQVKS.

Post-translationally, glycosylated. In terms of processing, covalently cross-linked by transglutaminase, which is important for the formation of the gelatinous copulatory plug. Five repeats of Q-X-K-(S/T) in the central region of the protein serve as the transglutaminase substrate site(s). In terms of tissue distribution, highly expressed in the seminal vesicle where it is detected in luminal epithelium of the mucosa folds, and also in luminal fluid (at protein level). Not detected in other tissues tested.

The protein localises to the secreted. Functionally, component of the copulatory plug. This is Seminal vesicle secretory protein 3A from Mus musculus (Mouse).